The following is a 767-amino-acid chain: GPI ethanolamine phosphate transferase 2 (767 aa).

2 N-linked (GlcNAc...) asparagine glycosylation sites follow: Asn-186 and Asn-401. Transmembrane regions (helical) follow at residues 407-427 (LGLFVAALAVLLSFFPAYGLG) and 434-454 (VTFLMLIIISYGGMMFASSYV). Asn-490 carries N-linked (GlcNAc...) asparagine glycosylation. A run of 3 helical transmembrane segments spans residues 513–533 (ILWALIILTYFDTCMHLCLNS), 538–558 (IWRSAAILTTIAAFFFKLVFV), and 595–615 (IPIFLMFRLQAIILDFLKMSA). An N-linked (GlcNAc...) asparagine glycan is attached at Asn-627. A run of 3 helical transmembrane segments spans residues 655–675 (SVVLVGVLTFISNWAGPIWWA), 695–715 (TLLTFHAATSLMSVMAACTML), and 733–755 (LAWTILNHMFINLPATANVSQVL).

This sequence belongs to the PIGG/PIGN/PIGO family. PIGG subfamily.

It localises to the endoplasmic reticulum membrane. It functions in the pathway glycolipid biosynthesis; glycosylphosphatidylinositol-anchor biosynthesis. Functionally, ethanolamine phosphate transferase involved in glycosylphosphatidylinositol-anchor biosynthesis. Transfers ethanolamine phosphate to the GPI second mannose. In Aspergillus fumigatus (strain ATCC MYA-4609 / CBS 101355 / FGSC A1100 / Af293) (Neosartorya fumigata), this protein is GPI ethanolamine phosphate transferase 2 (las21).